A 165-amino-acid polypeptide reads, in one-letter code: Transcription antitermination protein NusB (165 aa).

This sequence belongs to the NusB family.

In terms of biological role, involved in transcription antitermination. Required for transcription of ribosomal RNA (rRNA) genes. Binds specifically to the boxA antiterminator sequence of the ribosomal RNA (rrn) operons. In Nitratidesulfovibrio vulgaris (strain DSM 19637 / Miyazaki F) (Desulfovibrio vulgaris), this protein is Transcription antitermination protein NusB.